Consider the following 132-residue polypeptide: Small ribosomal subunit protein uS8 (132 aa).

The protein belongs to the universal ribosomal protein uS8 family. As to quaternary structure, part of the 30S ribosomal subunit. Contacts proteins S5 and S12.

In terms of biological role, one of the primary rRNA binding proteins, it binds directly to 16S rRNA central domain where it helps coordinate assembly of the platform of the 30S subunit. The protein is Small ribosomal subunit protein uS8 of Borrelia garinii subsp. bavariensis (strain ATCC BAA-2496 / DSM 23469 / PBi) (Borreliella bavariensis).